The sequence spans 435 residues: Tol-Pal system protein TolB (435 aa).

The first 28 residues, 1-28, serve as a signal peptide directing secretion; it reads MVKCSLIRALMVIAGLIGAAAFTTPANA. Positions 288–310 are disordered; sequence STAAIDTSPSYSPDGARVSFESD.

This sequence belongs to the TolB family. In terms of assembly, the Tol-Pal system is composed of five core proteins: the inner membrane proteins TolA, TolQ and TolR, the periplasmic protein TolB and the outer membrane protein Pal. They form a network linking the inner and outer membranes and the peptidoglycan layer.

The protein localises to the periplasm. Part of the Tol-Pal system, which plays a role in outer membrane invagination during cell division and is important for maintaining outer membrane integrity. The protein is Tol-Pal system protein TolB of Rhizobium leguminosarum bv. trifolii (strain WSM2304).